Reading from the N-terminus, the 504-residue chain is Anaerobic nitric oxide reductase transcription regulator NorR (504 aa).

Aspartate 57 is modified (4-aspartylphosphate). The Sigma-54 factor interaction domain maps to 187 to 416 (MIGLSPGMTQ…LEHAIHRAVV (230 aa)). ATP is bound by residues 215–222 (GETGTGKE) and 278–287 (ADNGTLFLDE). The H-T-H motif DNA-binding region spans 479–498 (WAACARMLETDVANLHRLAK).

It functions in the pathway nitrogen metabolism; nitric oxide reduction. Its function is as follows. Required for the expression of anaerobic nitric oxide (NO) reductase, acts as a transcriptional activator for at least the norVW operon. Activation also requires sigma-54. This Escherichia coli O9:H4 (strain HS) protein is Anaerobic nitric oxide reductase transcription regulator NorR.